Reading from the N-terminus, the 33-residue chain is Tail virion protein G9P (33 aa).

A helical transmembrane segment spans residues 5-25 (VGSFLGAYFLGFALFYGIGFF).

Belongs to the inovirus G9P protein family.

The protein localises to the virion. The protein resides in the host membrane. In terms of biological role, may initiate with G7P the virion concomitant assembly-budding process, by interacting with the packaging signal of the viral genome. The assembly-budding takes place at the host inner membrane. In turn, G7P and G9P are present at the end of the filamentous virion that emerges first from the bacterial host. The protein is Tail virion protein G9P (IX) of Salmonella phage IKe (Bacteriophage IKe).